Consider the following 239-residue polypeptide: Peptidase E (239 aa).

Catalysis depends on charge relay system residues serine 122, aspartate 137, and histidine 159.

This sequence belongs to the peptidase S51 family.

Its subcellular location is the cytoplasm. The enzyme catalyses Dipeptidase E catalyzes the hydrolysis of dipeptides Asp-|-Xaa. It does not act on peptides with N-terminal Glu, Asn or Gln, nor does it cleave isoaspartyl peptides.. Functionally, hydrolyzes dipeptides containing N-terminal aspartate residues. May play a role in allowing the cell to use peptide aspartate to spare carbon otherwise required for the synthesis of the aspartate family of amino acids. This Shewanella baltica (strain OS195) protein is Peptidase E.